The primary structure comprises 273 residues: Pantothenate synthetase (273 aa).

Residue 27 to 34 (MGALHAGH) participates in ATP binding. The Proton donor role is filled by histidine 34. Residue glutamine 58 participates in (R)-pantoate binding. Glutamine 58 is a binding site for beta-alanine. 144–147 (GKKD) provides a ligand contact to ATP. (R)-pantoate is bound at residue glutamine 150. ATP is bound by residues valine 173 and 181 to 184 (LSSR).

It belongs to the pantothenate synthetase family. Homodimer.

Its subcellular location is the cytoplasm. The catalysed reaction is (R)-pantoate + beta-alanine + ATP = (R)-pantothenate + AMP + diphosphate + H(+). It functions in the pathway cofactor biosynthesis; (R)-pantothenate biosynthesis; (R)-pantothenate from (R)-pantoate and beta-alanine: step 1/1. Catalyzes the condensation of pantoate with beta-alanine in an ATP-dependent reaction via a pantoyl-adenylate intermediate. The protein is Pantothenate synthetase of Campylobacter hominis (strain ATCC BAA-381 / DSM 21671 / CCUG 45161 / LMG 19568 / NCTC 13146 / CH001A).